Consider the following 97-residue polypeptide: C-C motif chemokine 8 (97 aa).

The first 23 residues, M1–T23, serve as a signal peptide directing secretion. Disulfide bonds link C32/C57 and C33/C73.

It belongs to the intercrine beta (chemokine CC) family. Monomer or homodimer; in equilibrium.

It is found in the secreted. Chemotactic factor that attracts monocytes. This protein can bind heparin. In Mus musculus (Mouse), this protein is C-C motif chemokine 8 (Ccl8).